Reading from the N-terminus, the 272-residue chain is Petrobactin import ATP-binding protein FpuC (272 aa).

In terms of domain architecture, ABC transporter spans 2–238 (ISVNKVFYAH…EMFQHIFGIE (237 aa)). An ATP-binding site is contributed by 34–41 (GPNGSGKS).

The protein belongs to the ABC transporter superfamily. The complex is composed of two ATP-binding proteins (FpuC), two transmembrane proteins (FpuB) and a solute-binding protein (FpuA).

It is found in the cell membrane. The catalysed reaction is a Fe(III)-siderophore(out) + ATP + H2O = a Fe(III)-siderophore(in) + ADP + phosphate + H(+). In terms of biological role, part of an ABC transporter complex involved in ferric-petrobactin uptake. Probably responsible for energy coupling to the transport system. The sequence is that of Petrobactin import ATP-binding protein FpuC from Bacillus anthracis.